The sequence spans 84 residues: Cytochrome b559 subunit alpha (84 aa).

The chain crosses the membrane as a helical span at residues 22–36 (VIHSITIPALFVAGW). Heme is bound at residue histidine 24.

It belongs to the PsbE/PsbF family. Heterodimer of an alpha subunit and a beta subunit. PSII is composed of 1 copy each of membrane proteins PsbA, PsbB, PsbC, PsbD, PsbE, PsbF, PsbH, PsbI, PsbJ, PsbK, PsbL, PsbM, PsbT, PsbX, PsbY, PsbZ, Psb30/Ycf12, at least 3 peripheral proteins of the oxygen-evolving complex and a large number of cofactors. It forms dimeric complexes. The cofactor is heme b.

It is found in the plastid. The protein resides in the chloroplast thylakoid membrane. Its function is as follows. This b-type cytochrome is tightly associated with the reaction center of photosystem II (PSII). PSII is a light-driven water:plastoquinone oxidoreductase that uses light energy to abstract electrons from H(2)O, generating O(2) and a proton gradient subsequently used for ATP formation. It consists of a core antenna complex that captures photons, and an electron transfer chain that converts photonic excitation into a charge separation. In Porphyra purpurea (Red seaweed), this protein is Cytochrome b559 subunit alpha.